Here is a 449-residue protein sequence, read N- to C-terminus: UDP-N-acetylmuramoylalanine--D-glutamate ligase (449 aa).

An ATP-binding site is contributed by Gly-118–Thr-124.

The protein belongs to the MurCDEF family.

It localises to the cytoplasm. The enzyme catalyses UDP-N-acetyl-alpha-D-muramoyl-L-alanine + D-glutamate + ATP = UDP-N-acetyl-alpha-D-muramoyl-L-alanyl-D-glutamate + ADP + phosphate + H(+). It functions in the pathway cell wall biogenesis; peptidoglycan biosynthesis. In terms of biological role, cell wall formation. Catalyzes the addition of glutamate to the nucleotide precursor UDP-N-acetylmuramoyl-L-alanine (UMA). The protein is UDP-N-acetylmuramoylalanine--D-glutamate ligase of Staphylococcus aureus (strain Mu3 / ATCC 700698).